A 360-amino-acid polypeptide reads, in one-letter code: Archaemetzincin-2 (360 aa).

Residue histidine 254 coordinates Zn(2+). Catalysis depends on glutamate 255, which acts as the Proton acceptor. Residues histidine 258, histidine 264, cysteine 265, cysteine 270, cysteine 289, and cysteine 292 each contribute to the Zn(2+) site.

It belongs to the peptidase M54 family. It depends on Zn(2+) as a cofactor. In terms of tissue distribution, down-regulated in testis from patients with maturation arrest (MA) or Sertoli cell-only syndrome (SCOS).

Probable zinc metalloprotease. In Homo sapiens (Human), this protein is Archaemetzincin-2 (AMZ2).